A 289-amino-acid chain; its full sequence is MSRTFLKMNGLGNDFVVIETLTQPFHPTAEEIRAIAKRPNAKEGEGGIGCDQVIAIDPPRAEGASAYVRFWNSDGEETGACGNGTRCVAWLLMQSGQKDSVAFDTVAGRLSGKMAGDKLVTVDMGQPGLAWNQIPLAEEMDTVGIELQVGPIDAPLVHTPGCVSMGNPHVVFFVDAPVSDAFARGTGSLVEHHPLFPEGVNVGFAHIAARDHIKLKVWERGAGLTAACGTGACAAQVAAVRRGLTDRVAKVEFESGALTIEWREADGHVIMTGPVTMEFVGKLPEKVAA.

The substrate site is built by N13, Q52, and N72. C81 functions as the Proton donor in the catalytic mechanism. Residues 82–83, N167, N201, and 219–220 each bind substrate; these read GN and ER. The active-site Proton acceptor is C228. Substrate is bound at residue 229-230; it reads GT.

It belongs to the diaminopimelate epimerase family. Homodimer.

It localises to the cytoplasm. It catalyses the reaction (2S,6S)-2,6-diaminopimelate = meso-2,6-diaminopimelate. The protein operates within amino-acid biosynthesis; L-lysine biosynthesis via DAP pathway; DL-2,6-diaminopimelate from LL-2,6-diaminopimelate: step 1/1. Catalyzes the stereoinversion of LL-2,6-diaminopimelate (L,L-DAP) to meso-diaminopimelate (meso-DAP), a precursor of L-lysine and an essential component of the bacterial peptidoglycan. The chain is Diaminopimelate epimerase from Caulobacter sp. (strain K31).